A 703-amino-acid polypeptide reads, in one-letter code: Serotransferrin (703 aa).

The N-terminal stretch at 1 to 19 (MDLSLHVALCLGMLALCLA) is a signal peptide. Transferrin-like domains lie at 27-341 (VRWC…ALKE) and 354-686 (VRWC…SLNK). 2 disulfides stabilise this stretch: cysteine 30-cysteine 65 and cysteine 40-cysteine 56. Fe(3+)-binding residues include aspartate 80 and tyrosine 112. Cystine bridges form between cysteine 135–cysteine 218, cysteine 180–cysteine 193, and cysteine 246–cysteine 260. Hydrogencarbonate is bound by residues threonine 137, lysine 141, alanine 143, and glycine 144. Position 212 (tyrosine 212) interacts with Fe(3+). Position 268 (histidine 268) interacts with Fe(3+). Residues 341–350 (EGVKEDDLAA) form a connecting region region. 2 cysteine pairs are disulfide-bonded: cysteine 357–cysteine 389 and cysteine 367–cysteine 380. Fe(3+)-binding residues include aspartate 404 and tyrosine 443. Disulfide bonds link cysteine 414/cysteine 698, cysteine 432/cysteine 659, cysteine 466/cysteine 545, cysteine 490/cysteine 687, cysteine 500/cysteine 514, cysteine 511/cysteine 528, and cysteine 585/cysteine 599. Residues threonine 468, arginine 472, alanine 474, and glycine 475 each coordinate hydrogencarbonate. Residue tyrosine 539 coordinates Fe(3+). Residue histidine 607 coordinates Fe(3+).

The protein belongs to the transferrin family. Monomer. As to expression, plasma.

The protein localises to the secreted. Its function is as follows. Transferrins are iron binding transport proteins which can bind two Fe(3+) ions in association with the binding of an anion, usually bicarbonate. It is responsible for the transport of iron from sites of absorption and heme degradation to those of storage and utilization. Serum transferrin may also have a further role in stimulating cell proliferation. In Xenopus tropicalis (Western clawed frog), this protein is Serotransferrin (tf).